Consider the following 211-residue polypeptide: Glycerol-3-phosphate acyltransferase (211 aa).

Helical transmembrane passes span alanine 5 to cysteine 25, valine 58 to valine 78, proline 80 to phenylalanine 100, leucine 112 to leucine 132, and glycine 138 to phenylalanine 158.

This sequence belongs to the PlsY family. In terms of assembly, probably interacts with PlsX.

It localises to the cell inner membrane. It carries out the reaction an acyl phosphate + sn-glycerol 3-phosphate = a 1-acyl-sn-glycero-3-phosphate + phosphate. It functions in the pathway lipid metabolism; phospholipid metabolism. Its function is as follows. Catalyzes the transfer of an acyl group from acyl-phosphate (acyl-PO(4)) to glycerol-3-phosphate (G3P) to form lysophosphatidic acid (LPA). This enzyme utilizes acyl-phosphate as fatty acyl donor, but not acyl-CoA or acyl-ACP. The chain is Glycerol-3-phosphate acyltransferase from Pectobacterium atrosepticum (strain SCRI 1043 / ATCC BAA-672) (Erwinia carotovora subsp. atroseptica).